Reading from the N-terminus, the 309-residue chain is MAFSFQVSKMNSFDNYNAAIHPKHDLISVNAPVFGKDAKLSPHLAIVLADKGFMLEQVCLPWRYFTDRGFVVEFVIAESIFPPRPPKPNDSYMTGWKSHVLGASKEILDIYSVLCTLNEFNNPKCYRSNGFTFDNFSAVFITGGRNPFVREMLEDPLLHASLVPYIHSCRTIQPDEEVKDNRKIKVLGAISQGAAAIYLAEPNINMKTTTIPAWMERSNSFLNPTPDNSTYPYAATIIPKDKYVSGPYRRVAFTYQDENYYYISGRSNKDIGELSKKMYLMYKQAYKDLNASLRERRRRSTSNRRNSGI.

This sequence to S.pombe SpAC14C4.04.

This is an uncharacterized protein from Schizosaccharomyces pombe (strain 972 / ATCC 24843) (Fission yeast).